Consider the following 377-residue polypeptide: Succinyl-diaminopimelate desuccinylase (377 aa).

Histidine 66 lines the Zn(2+) pocket. Aspartate 68 is a catalytic residue. Aspartate 99 contacts Zn(2+). Glutamate 133 serves as the catalytic Proton acceptor. Residues glutamate 134, glutamate 162, and histidine 348 each coordinate Zn(2+).

The protein belongs to the peptidase M20A family. DapE subfamily. In terms of assembly, homodimer. Zn(2+) serves as cofactor. It depends on Co(2+) as a cofactor.

The catalysed reaction is N-succinyl-(2S,6S)-2,6-diaminopimelate + H2O = (2S,6S)-2,6-diaminopimelate + succinate. It functions in the pathway amino-acid biosynthesis; L-lysine biosynthesis via DAP pathway; LL-2,6-diaminopimelate from (S)-tetrahydrodipicolinate (succinylase route): step 3/3. In terms of biological role, catalyzes the hydrolysis of N-succinyl-L,L-diaminopimelic acid (SDAP), forming succinate and LL-2,6-diaminopimelate (DAP), an intermediate involved in the bacterial biosynthesis of lysine and meso-diaminopimelic acid, an essential component of bacterial cell walls. The sequence is that of Succinyl-diaminopimelate desuccinylase from Methylococcus capsulatus (strain ATCC 33009 / NCIMB 11132 / Bath).